The following is a 447-amino-acid chain: Glutamyl-tRNA(Gln) amidotransferase subunit A (447 aa).

Catalysis depends on charge relay system residues lysine 51 and serine 126. The active-site Acyl-ester intermediate is the serine 150.

The protein belongs to the amidase family. GatA subfamily. Heterotrimer of A, B and C subunits.

It carries out the reaction L-glutamyl-tRNA(Gln) + L-glutamine + ATP + H2O = L-glutaminyl-tRNA(Gln) + L-glutamate + ADP + phosphate + H(+). Functionally, allows the formation of correctly charged Gln-tRNA(Gln) through the transamidation of misacylated Glu-tRNA(Gln) in organisms which lack glutaminyl-tRNA synthetase. The reaction takes place in the presence of glutamine and ATP through an activated gamma-phospho-Glu-tRNA(Gln). This Helicobacter hepaticus (strain ATCC 51449 / 3B1) protein is Glutamyl-tRNA(Gln) amidotransferase subunit A.